The chain runs to 538 residues: Phosphatidylethanolamine transferase Mcr-2 (538 aa).

The next 5 helical transmembrane spans lie at 14 to 34 (PFVLMGLVALFLAATANLTFF), 47 to 67 (LGFIISMAVAVMGAMLLIVVL), 72 to 92 (YVLKPVLILLLIMGAVTSYFT), 121 to 141 (LAFFVRIIGLGVLPSVLVAVA), and 161 to 181 (VSLVLLLVPIGLFSSQYASFF). 2 residues coordinate Zn(2+): Glu-244 and Thr-283. Disulfide bonds link Cys-279–Cys-289, Cys-354–Cys-362, and Cys-412–Cys-420. Position 283 is a phosphothreonine (Thr-283). Zn(2+) contacts are provided by Asp-463 and His-464.

It belongs to the phosphoethanolamine transferase family. In terms of assembly, monomer. Phosphorylated at Thr-283; may represent an intermediate in the catalytic mechanism.

It localises to the cell inner membrane. The enzyme catalyses lipid A (E. coli) + a 1,2-diacyl-sn-glycero-3-phosphoethanolamine + H(+) = lipid A 4'-(2-aminoethyl diphosphate) (E. coli) + a 1,2-diacyl-sn-glycerol. Probably catalyzes the addition of a phosphoethanolamine moiety to lipid A. Phosphoethanolamine modification of lipid A confers polymyxin resistance. Confers resistance to polymyxin-type antibiotics such as colistin. This Escherichia coli protein is Phosphatidylethanolamine transferase Mcr-2.